Here is a 384-residue protein sequence, read N- to C-terminus: Dual-specificity RNA methyltransferase RlmN (384 aa).

The active-site Proton acceptor is glutamate 105. The region spanning 111 to 350 (EVDRATLCVS…TIVRKTRGDD (240 aa)) is the Radical SAM core domain. An intrachain disulfide couples cysteine 118 to cysteine 355. 3 residues coordinate [4Fe-4S] cluster: cysteine 125, cysteine 129, and cysteine 132. Residues 179 to 180 (GE), serine 211, 233 to 235 (SLH), and asparagine 312 contribute to the S-adenosyl-L-methionine site. Catalysis depends on cysteine 355, which acts as the S-methylcysteine intermediate.

It belongs to the radical SAM superfamily. RlmN family. [4Fe-4S] cluster is required as a cofactor.

The protein localises to the cytoplasm. The catalysed reaction is adenosine(2503) in 23S rRNA + 2 reduced [2Fe-2S]-[ferredoxin] + 2 S-adenosyl-L-methionine = 2-methyladenosine(2503) in 23S rRNA + 5'-deoxyadenosine + L-methionine + 2 oxidized [2Fe-2S]-[ferredoxin] + S-adenosyl-L-homocysteine. It catalyses the reaction adenosine(37) in tRNA + 2 reduced [2Fe-2S]-[ferredoxin] + 2 S-adenosyl-L-methionine = 2-methyladenosine(37) in tRNA + 5'-deoxyadenosine + L-methionine + 2 oxidized [2Fe-2S]-[ferredoxin] + S-adenosyl-L-homocysteine. Functionally, specifically methylates position 2 of adenine 2503 in 23S rRNA and position 2 of adenine 37 in tRNAs. m2A2503 modification seems to play a crucial role in the proofreading step occurring at the peptidyl transferase center and thus would serve to optimize ribosomal fidelity. This Escherichia coli O9:H4 (strain HS) protein is Dual-specificity RNA methyltransferase RlmN.